Consider the following 155-residue polypeptide: SsrA-binding protein (155 aa).

Belongs to the SmpB family.

It localises to the cytoplasm. Functionally, required for rescue of stalled ribosomes mediated by trans-translation. Binds to transfer-messenger RNA (tmRNA), required for stable association of tmRNA with ribosomes. tmRNA and SmpB together mimic tRNA shape, replacing the anticodon stem-loop with SmpB. tmRNA is encoded by the ssrA gene; the 2 termini fold to resemble tRNA(Ala) and it encodes a 'tag peptide', a short internal open reading frame. During trans-translation Ala-aminoacylated tmRNA acts like a tRNA, entering the A-site of stalled ribosomes, displacing the stalled mRNA. The ribosome then switches to translate the ORF on the tmRNA; the nascent peptide is terminated with the 'tag peptide' encoded by the tmRNA and targeted for degradation. The ribosome is freed to recommence translation, which seems to be the essential function of trans-translation. The protein is SsrA-binding protein of Bacillus mycoides (strain KBAB4) (Bacillus weihenstephanensis).